Reading from the N-terminus, the 399-residue chain is DNA primase DnaG (399 aa).

The Toprim domain maps to 182 to 268; it reads DAIIVVEGRA…EVEDLTQKEI (87 aa). Mg(2+)-binding residues include glutamate 188, aspartate 230, and aspartate 232.

The protein belongs to the archaeal DnaG primase family. Forms a ternary complex with MCM helicase and DNA. Component of the archaeal exosome complex. Requires Mg(2+) as cofactor.

It carries out the reaction ssDNA + n NTP = ssDNA/pppN(pN)n-1 hybrid + (n-1) diphosphate.. Its function is as follows. RNA polymerase that catalyzes the synthesis of short RNA molecules used as primers for DNA polymerase during DNA replication. Also part of the exosome, which is a complex involved in RNA degradation. Acts as a poly(A)-binding protein that enhances the interaction between heteromeric, adenine-rich transcripts and the exosome. The protein is DNA primase DnaG of Archaeoglobus fulgidus (strain ATCC 49558 / DSM 4304 / JCM 9628 / NBRC 100126 / VC-16).